Reading from the N-terminus, the 459-residue chain is MNSRLQEIRERQKLRRQLLAQQLGAENADSIGAVLNSKDDQREIAETRETCRASYDTSAPNAKRKYPDEGEADEEEIEEYKDEVELQQDEENLPYEEEIYKDSSTFLKGTQSLNPHNDYCQHFVDTGHRPQNFIRDVGLADRFEEYPKLRELIRLKDELISKSNTPPMYLQADLEAFDIRELKSKFDVILLEPPLEEYYRETGITANEKCWTWDDIMKLEIEEIAAPRSFVFLWCGSGEGLDLGRVCLRKWGYRRCEDICWIKTNKNNPGKTKTLDPKAVFQRTKEHCLMGIKGTVRRSTDGDFIHANVDIDLIITEEPEIGNIEKPVEIFHIIEHFCLGRRRLHLFGRDSTIRPGWLTVGPTLTNSNFNAETYSSYFTAPNSHLTGCTEEIERLRPKSPPPKSKSDRGGGAPRGGGRGGTSAGRGERGRERNRTNFRGERGGFRGGRGGTHRGGFPTR.

The segment at 50–73 (TCRASYDTSAPNAKRKYPDEGEAD) is disordered. Interaction with METTL3 regions lie at residues 135-136 (RD) and 237-238 (SG). A positively charged region required for RNA-binding region spans residues 245-254 (RVCLRKWGYR). 2 interaction with METTL3 regions span residues 255 to 258 (RCED) and 278 to 287 (KAVFQRTKEH). Positions 297 to 298 (RR) are positively charged region required for RNA-binding. Residues 308–312 (NVDID) form an interaction with METTL3 region. The disordered stretch occupies residues 392–459 (IERLRPKSPP…GTHRGGFPTR (68 aa)). A compositionally biased stretch (gly residues) spans 409–423 (GGGAPRGGGRGGTSA). A compositionally biased stretch (basic and acidic residues) spans 425–443 (RGERGRERNRTNFRGERGG). The segment covering 444 to 453 (FRGGRGGTHR) has biased composition (gly residues).

The protein belongs to the MT-A70-like family. As to quaternary structure, heterodimer; heterodimerizes with METTL3 to form an antiparallel heterodimer that constitutes an active methyltransferase. Component of the WMM complex, a N6-methyltransferase complex composed of a catalytic subcomplex, named MAC, and of an associated subcomplex, named MACOM. The MAC subcomplex is composed of METTL3 and METTL14.

Its subcellular location is the nucleus. The METTL3-METTL14 heterodimer forms a N6-methyltransferase complex that methylates adenosine residues at the N(6) position of some mRNAs and regulates the circadian clock, differentiation of embryonic stem cells and cortical neurogenesis. In the heterodimer formed with METTL3, METTL14 constitutes the RNA-binding scaffold that recognizes the substrate rather than the catalytic core. N6-methyladenosine (m6A), which takes place at the 5'-[AG]GAC-3' consensus sites of some mRNAs, plays a role in mRNA stability and processing. The chain is N(6)-adenosine-methyltransferase non-catalytic subunit METTL14 (METTL14) from Gallus gallus (Chicken).